We begin with the raw amino-acid sequence, 410 residues long: Elongation factor Tu, chloroplastic (410 aa).

The 206-residue stretch at 10–215 (KPHVNIGTIG…IVDEYIPTPQ (206 aa)) folds into the tr-type G domain. Residues 19 to 26 (GHVDHGKT) are G1. 19-26 (GHVDHGKT) is a GTP binding site. Threonine 26 contacts Mg(2+). Residues 61 to 65 (GITIN) form a G2 region. The G3 stretch occupies residues 82 to 85 (DCPG). Residues 82–86 (DCPGH) and 137–140 (NKAD) contribute to the GTP site. The segment at 137–140 (NKAD) is G4. The G5 stretch occupies residues 175-177 (SAL).

The protein belongs to the TRAFAC class translation factor GTPase superfamily. Classic translation factor GTPase family. EF-Tu/EF-1A subfamily.

It is found in the plastid. It localises to the chloroplast. It catalyses the reaction GTP + H2O = GDP + phosphate + H(+). In terms of biological role, GTP hydrolase that promotes the GTP-dependent binding of aminoacyl-tRNA to the A-site of ribosomes during protein biosynthesis. This is Elongation factor Tu, chloroplastic (tufA) from Cyanidioschyzon merolae (strain NIES-3377 / 10D) (Unicellular red alga).